The chain runs to 295 residues: 4-hydroxy-tetrahydrodipicolinate synthase (295 aa).

Thr-46 contacts pyruvate. Catalysis depends on Tyr-134, which acts as the Proton donor/acceptor. Residue Lys-162 is the Schiff-base intermediate with substrate of the active site. Ile-205 is a binding site for pyruvate.

Belongs to the DapA family. In terms of assembly, homotetramer; dimer of dimers.

It is found in the cytoplasm. The enzyme catalyses L-aspartate 4-semialdehyde + pyruvate = (2S,4S)-4-hydroxy-2,3,4,5-tetrahydrodipicolinate + H2O + H(+). The protein operates within amino-acid biosynthesis; L-lysine biosynthesis via DAP pathway; (S)-tetrahydrodipicolinate from L-aspartate: step 3/4. In terms of biological role, catalyzes the condensation of (S)-aspartate-beta-semialdehyde [(S)-ASA] and pyruvate to 4-hydroxy-tetrahydrodipicolinate (HTPA). In Anaeromyxobacter dehalogenans (strain 2CP-C), this protein is 4-hydroxy-tetrahydrodipicolinate synthase.